A 343-amino-acid polypeptide reads, in one-letter code: N-acetyl-gamma-glutamyl-phosphate reductase (343 aa).

Cys-147 is an active-site residue.

Belongs to the NAGSA dehydrogenase family. Type 1 subfamily.

The protein localises to the cytoplasm. The enzyme catalyses N-acetyl-L-glutamate 5-semialdehyde + phosphate + NADP(+) = N-acetyl-L-glutamyl 5-phosphate + NADPH + H(+). It participates in amino-acid biosynthesis; L-arginine biosynthesis; N(2)-acetyl-L-ornithine from L-glutamate: step 3/4. Its function is as follows. Catalyzes the NADPH-dependent reduction of N-acetyl-5-glutamyl phosphate to yield N-acetyl-L-glutamate 5-semialdehyde. The sequence is that of N-acetyl-gamma-glutamyl-phosphate reductase from Staphylococcus saprophyticus subsp. saprophyticus (strain ATCC 15305 / DSM 20229 / NCIMB 8711 / NCTC 7292 / S-41).